We begin with the raw amino-acid sequence, 260 residues long: Small ribosomal subunit protein uS2 (260 aa).

The disordered stretch occupies residues 240 to 260; sequence VLKPKLPYQPNRRPYQETVKK.

It belongs to the universal ribosomal protein uS2 family.

This is Small ribosomal subunit protein uS2 from Phytoplasma australiense.